Here is a 275-residue protein sequence, read N- to C-terminus: Ribosome biogenesis protein RLP7 (275 aa).

Residues 14–45 (KRKNNDRKRLEKQEQARQRQLEQKKKNDQRSK) are disordered. The segment covering 20 to 44 (RKRLEKQEQARQRQLEQKKKNDQRS) has biased composition (basic and acidic residues).

This sequence belongs to the universal ribosomal protein uL30 family.

It localises to the nucleus. It is found in the nucleolus. In terms of biological role, involved in the biogenesis of the 60S ribosomal subunit. May act as a specificity factor that binds precursor rRNAs and tethers the enzymes that carry out the early 5' to 3' exonucleolytic reactions that generate the mature rRNAs. The sequence is that of Ribosome biogenesis protein RLP7 (RLP7) from Debaryomyces hansenii (strain ATCC 36239 / CBS 767 / BCRC 21394 / JCM 1990 / NBRC 0083 / IGC 2968) (Yeast).